Reading from the N-terminus, the 30-residue chain is Sillucin (30 aa).

4 disulfides stabilise this stretch: Cys2–Cys7, Cys12–Cys24, Cys13–Cys30, and Cys14–Cys21.

It localises to the secreted. In terms of biological role, sillucin is an antimicrobial agent produced by the thermophilic fungus Rhizomucor pusillus in liquid culture; it is effective against Gram-positive bacteria at the level of RNA metabolism. The sequence is that of Sillucin from Rhizomucor pusillus.